We begin with the raw amino-acid sequence, 294 residues long: Histone deacetylase HDT3 (294 aa).

Methionine 1 carries the post-translational modification N-acetylmethionine. Positions 2–5 (EFWG) are required to repress transcription. The segment at 124 to 269 (QVNFQLPNED…TPKSAGAFGC (146 aa)) is disordered. The span at 140 to 188 (DDADGSEEDSSDDDDSENSGDEEEEKVTAESDSEEDDSSDDEEDDSSEE) shows a compositional bias: acidic residues. Residues 189–202 (ETPKKPEEPKKRSA) show a composition bias toward basic and acidic residues. Residues 203–213 (EPNSSKNPASN) show a composition bias toward low complexity. A compositionally biased stretch (polar residues) spans 252-262 (GETSKQQQTPK). The C2H2-type zinc finger occupies 267–290 (FGCKSCTRTFTSEMGLQSHTKAKH).

This sequence belongs to the histone deacetylase HD2 family. In terms of assembly, interacts with DNMT2. In terms of tissue distribution, expressed in leaves, roots, stems, young plantlets, flowers and siliques. Highest levels in ovules, embryos, shoot apical meristems and first leaves. Also expressed in somatic embryos.

The protein localises to the nucleus. It is found in the nucleolus. In terms of biological role, probably mediates the deacetylation of lysine residues on the N-terminal part of the core histones (H2A, H2B, H3 and H4). Histone deacetylation gives a tag for epigenetic repression and plays an important role in transcriptional regulation, cell cycle progression and developmental events. Involved in the modulation of abscisic acid and stress-responsive genes. This chain is Histone deacetylase HDT3 (HDT3), found in Arabidopsis thaliana (Mouse-ear cress).